The primary structure comprises 89 residues: Putative regulatory protein CLH_1161 (89 aa).

It belongs to the RemA family.

The sequence is that of Putative regulatory protein CLH_1161 from Clostridium botulinum (strain Alaska E43 / Type E3).